A 76-amino-acid chain; its full sequence is Conotoxin TsMLCL-03 (76 aa).

The first 19 residues, 1 to 19 (MLCLPVFIILLLLASPAAP), serve as a signal peptide directing secretion. Positions 20–44 (NPLERRIQSDLIRTALEDADMKTPK) are excised as a propeptide.

Belongs to the conotoxin T superfamily. Post-translationally, contains 2 disulfide bonds that can be either 'C1-C3, C2-C4' or 'C1-C4, C2-C3', since these disulfide connectivities have been observed for conotoxins with cysteine framework V (for examples, see AC P0DQQ7 and AC P81755). As to expression, expressed by the venom duct.

The protein localises to the secreted. In Conus tessulatus (Tessellate cone), this protein is Conotoxin TsMLCL-03.